Reading from the N-terminus, the 387-residue chain is Tetratricopeptide repeat protein 4 (387 aa).

Residue M1 is modified to N-acetylmethionine. 2 positions are modified to phosphoserine: S47 and S51. TPR repeat units lie at residues 79-112, 117-150, and 151-184; these read AKTY…KCAD, AVLY…KPCH, and LKAI…DAKE. A Phosphoserine modification is found at S243.

It belongs to the TTC4 family. Interacts (via TPR repeats) with HSP90AB1. Interacts with HSPA8 and CDC6. Interacts with TBK1. Interacts with MSL1. Highly expressed in proliferating tissue and tumor cell lines but not in normal cell lines.

Its subcellular location is the nucleus. It localises to the nucleoplasm. It is found in the cytoplasm. In terms of biological role, may act as a co-chaperone for HSP90AB1. Promotes Sendai virus (SeV)-induced host cell innate immune responses. This chain is Tetratricopeptide repeat protein 4 (TTC4), found in Homo sapiens (Human).